Reading from the N-terminus, the 133-residue chain is Ribosome-binding factor A (133 aa).

This sequence belongs to the RbfA family. In terms of assembly, monomer. Binds 30S ribosomal subunits, but not 50S ribosomal subunits or 70S ribosomes.

It localises to the cytoplasm. In terms of biological role, one of several proteins that assist in the late maturation steps of the functional core of the 30S ribosomal subunit. Associates with free 30S ribosomal subunits (but not with 30S subunits that are part of 70S ribosomes or polysomes). Required for efficient processing of 16S rRNA. May interact with the 5'-terminal helix region of 16S rRNA. The sequence is that of Ribosome-binding factor A from Bordetella parapertussis (strain 12822 / ATCC BAA-587 / NCTC 13253).